A 607-amino-acid polypeptide reads, in one-letter code: Threonine--tRNA ligase (607 aa).

Residues D200 to P502 are catalytic. 3 residues coordinate Zn(2+): C299, H350, and H479.

Belongs to the class-II aminoacyl-tRNA synthetase family. Homodimer. The cofactor is Zn(2+).

The protein resides in the cytoplasm. It catalyses the reaction tRNA(Thr) + L-threonine + ATP = L-threonyl-tRNA(Thr) + AMP + diphosphate + H(+). In terms of biological role, catalyzes the attachment of threonine to tRNA(Thr) in a two-step reaction: L-threonine is first activated by ATP to form Thr-AMP and then transferred to the acceptor end of tRNA(Thr). Also edits incorrectly charged L-seryl-tRNA(Thr). The polypeptide is Threonine--tRNA ligase (Synechococcus sp. (strain ATCC 27144 / PCC 6301 / SAUG 1402/1) (Anacystis nidulans)).